Reading from the N-terminus, the 343-residue chain is Proto-oncogene serine/threonine-protein kinase mos (343 aa).

A Protein kinase domain is found at 63–339; the sequence is VCLMHRLGSG…LLQRDLKAFR (277 aa). ATP is bound by residues 69 to 77 and Lys-90; that span reads LGSGGFGSV. Asp-198 acts as the Proton acceptor in catalysis.

Belongs to the protein kinase superfamily. Ser/Thr protein kinase family. As to quaternary structure, interacts with MAP2K1/MEK1.

It is found in the cytoplasm. It catalyses the reaction L-seryl-[protein] + ATP = O-phospho-L-seryl-[protein] + ADP + H(+). It carries out the reaction L-threonyl-[protein] + ATP = O-phospho-L-threonyl-[protein] + ADP + H(+). Serine/threonine kinase involved in the regulation of MAPK signaling. Is an activator of the ERK1/2 signaling cascade playing an essential role in the stimulation of oocyte maturation. This Mus musculus (Mouse) protein is Proto-oncogene serine/threonine-protein kinase mos.